Consider the following 230-residue polypeptide: Sugar fermentation stimulation protein homolog (230 aa).

The protein belongs to the SfsA family.

The sequence is that of Sugar fermentation stimulation protein homolog from Caldivirga maquilingensis (strain ATCC 700844 / DSM 13496 / JCM 10307 / IC-167).